A 619-amino-acid polypeptide reads, in one-letter code: Chaperone protein DnaK (619 aa).

Threonine 175 bears the Phosphothreonine; by autocatalysis mark. The tract at residues asparagine 578 to lysine 619 is disordered. The span at asparagine 589–aspartate 606 shows a compositional bias: low complexity. Over residues asparagine 607–lysine 619 the composition is skewed to acidic residues.

This sequence belongs to the heat shock protein 70 family.

Functionally, acts as a chaperone. This chain is Chaperone protein DnaK, found in Clostridium perfringens (strain SM101 / Type A).